A 325-amino-acid chain; its full sequence is ATP synthase gamma chain (325 aa).

This sequence belongs to the ATPase gamma chain family. In terms of assembly, F-type ATPases have 2 components, CF(1) - the catalytic core - and CF(0) - the membrane proton channel. CF(1) has five subunits: alpha(3), beta(3), gamma(1), delta(1), epsilon(1). CF(0) has three main subunits: a, b and c.

It is found in the cell membrane. In terms of biological role, produces ATP from ADP in the presence of a proton gradient across the membrane. The gamma chain is believed to be important in regulating ATPase activity and the flow of protons through the CF(0) complex. The sequence is that of ATP synthase gamma chain from Corynebacterium urealyticum (strain ATCC 43042 / DSM 7109).